The following is a 448-amino-acid chain: tRNA(Ile)-lysidine synthase (448 aa).

An ATP-binding site is contributed by 30–35; the sequence is GGGADS.

It belongs to the tRNA(Ile)-lysidine synthase family.

The protein resides in the cytoplasm. The enzyme catalyses cytidine(34) in tRNA(Ile2) + L-lysine + ATP = lysidine(34) in tRNA(Ile2) + AMP + diphosphate + H(+). Ligates lysine onto the cytidine present at position 34 of the AUA codon-specific tRNA(Ile) that contains the anticodon CAU, in an ATP-dependent manner. Cytidine is converted to lysidine, thus changing the amino acid specificity of the tRNA from methionine to isoleucine. The chain is tRNA(Ile)-lysidine synthase from Idiomarina loihiensis (strain ATCC BAA-735 / DSM 15497 / L2-TR).